The following is a 463-amino-acid chain: Cysteine--tRNA ligase (463 aa).

Cys30 contributes to the Zn(2+) binding site. Positions 32–42 (MTVYDYCHVGH) match the 'HIGH' region motif. Residues Cys214, His239, and Glu243 each contribute to the Zn(2+) site. A 'KMSKS' region motif is present at residues 271-275 (KMSKS). Lys274 contacts ATP.

Belongs to the class-I aminoacyl-tRNA synthetase family. In terms of assembly, monomer. Requires Zn(2+) as cofactor.

It localises to the cytoplasm. The enzyme catalyses tRNA(Cys) + L-cysteine + ATP = L-cysteinyl-tRNA(Cys) + AMP + diphosphate. In Ralstonia pickettii (strain 12J), this protein is Cysteine--tRNA ligase.